A 217-amino-acid polypeptide reads, in one-letter code: Large ribosomal subunit protein uL3 (217 aa).

Belongs to the universal ribosomal protein uL3 family. In terms of assembly, part of the 50S ribosomal subunit. Forms a cluster with proteins L14 and L19.

In terms of biological role, one of the primary rRNA binding proteins, it binds directly near the 3'-end of the 23S rRNA, where it nucleates assembly of the 50S subunit. The protein is Large ribosomal subunit protein uL3 of Mycobacterium leprae (strain TN).